The primary structure comprises 604 residues: UvrABC system protein C (604 aa).

Residues 17 to 95 (SQPGVYRMLN…IKSLAPRYNI (79 aa)) form the GIY-YIG domain. In terms of domain architecture, UVR spans 204 to 239 (DEVLKTIEQKMFEASDRQAYEQAVLFRDQMQALRMI).

Belongs to the UvrC family. In terms of assembly, interacts with UvrB in an incision complex.

The protein localises to the cytoplasm. Functionally, the UvrABC repair system catalyzes the recognition and processing of DNA lesions. UvrC both incises the 5' and 3' sides of the lesion. The N-terminal half is responsible for the 3' incision and the C-terminal half is responsible for the 5' incision. The protein is UvrABC system protein C of Nitrosomonas eutropha (strain DSM 101675 / C91 / Nm57).